Consider the following 259-residue polypeptide: uncharacterized protein (259 aa).

The ABC transporter domain occupies 4–248; it reads LQTTNLSKTY…SILDTLSVLG (245 aa). 42-49 contributes to the ATP binding site; that stretch reads GPSGSGKT.

The protein belongs to the ABC transporter superfamily.

This is an uncharacterized protein from Bacillus subtilis (strain 168).